A 376-amino-acid chain; its full sequence is Ribonucleoside-diphosphate reductase subunit beta (376 aa).

Fe cation is bound by residues Asp-85, Glu-116, and His-119. The active site involves Tyr-123. Residues Glu-205, Glu-239, and His-242 each coordinate Fe cation.

Belongs to the ribonucleoside diphosphate reductase small chain family. As to quaternary structure, tetramer of two alpha and two beta subunits. Fe cation serves as cofactor.

The catalysed reaction is a 2'-deoxyribonucleoside 5'-diphosphate + [thioredoxin]-disulfide + H2O = a ribonucleoside 5'-diphosphate + [thioredoxin]-dithiol. Its function is as follows. Provides the precursors necessary for DNA synthesis. Catalyzes the biosynthesis of deoxyribonucleotides from the corresponding ribonucleotides. The chain is Ribonucleoside-diphosphate reductase subunit beta (nrdB) from Haemophilus influenzae (strain ATCC 51907 / DSM 11121 / KW20 / Rd).